A 230-amino-acid polypeptide reads, in one-letter code: CRP-like protein Clp (230 aa).

Residue 18 to 139 (PSLTLDAGTI…APRILYAIGV (122 aa)) participates in a nucleoside 3',5'-cyclic phosphate binding. Positions 158–230 (LDVTDRIVRT…GKTVVLYGTR (73 aa)) constitute an HTH crp-type domain. Residues 190-209 (RQELARLVGCSREMAGRVLK) constitute a DNA-binding region (H-T-H motif).

Homodimer.

The protein localises to the cytoplasm. With respect to regulation, allosterically inhibited by cyclic di-GMP (c-di-GMP), which binds to Clp and abolishes its ability to bind its target gene promoter. Its function is as follows. Global transcriptional regulator that regulates virulence factors production by activating or repressing the expression of a large set of genes in diffusible signal factor (DSF) pathway. This Xanthomonas campestris pv. campestris (strain 8004) protein is CRP-like protein Clp (clp).